A 284-amino-acid polypeptide reads, in one-letter code: Phospholipid phosphatase 1 (284 aa).

Over 1 to 6 (MFDKTR) the chain is Cytoplasmic. Positions 5–7 (TRL) match the PDZ-binding; involved in localization to the apical cell membrane motif. A helical membrane pass occupies residues 7 to 27 (LPYVALDVLCVLLAGLPFAIL). Topologically, residues 28–53 (TSRHTPFQRGVFCNDESIKYPYKEDT) are extracellular. Residues 54–74 (IPYALLGGIIIPFSIIVIILG) traverse the membrane as a helical segment. Topologically, residues 75 to 94 (ETLSVYCNLLHSNSFIRNNY) are cytoplasmic. The helical transmembrane segment at 95 to 115 (IATIYKAIGTFLFGAAASQSL) threads the bilayer. Residues 116–164 (TDIAKYSIGRLRPHFLDVCDPDWSKINCSDGYIEYYICRGNAERVKEGR) lie on the Extracellular side of the membrane. The phosphatase sequence motif I stretch occupies residues 120-128 (KYSIGRLRP). Asn-142 is a glycosylation site (N-linked (GlcNAc...) asparagine). The helical transmembrane segment at 165-185 (LSFYSGHSSFSMYCMLFVALY) threads the bilayer. The phosphatase sequence motif II stretch occupies residues 168–171 (YSGH). His-171 serves as the catalytic Proton donors. Residues 186-199 (LQARMKGDWARLLR) lie on the Cytoplasmic side of the membrane. Residues 200–220 (PTLQFGLVAVSIYVGLSRVSD) traverse the membrane as a helical segment. Residues 216-227 (SRVSDYKHHWSD) are phosphatase sequence motif III. Residues 221 to 229 (YKHHWSDVL) are Extracellular-facing. The active-site Nucleophile is the His-223. Residues 230 to 250 (TGLIQGALVAILVAVYVSDFF) form a helical membrane-spanning segment. Residues 251-284 (KERTSFKERKEEDSHTTLHETPTTGNHYPSNHQP) are Cytoplasmic-facing. A disordered region spans residues 260-284 (KEEDSHTTLHETPTTGNHYPSNHQP). Residues 269 to 284 (HETPTTGNHYPSNHQP) show a composition bias toward polar residues.

The protein belongs to the PA-phosphatase related phosphoesterase family. In terms of assembly, forms functional homodimers and homooligomers that are not required for substrate recognition and catalytic activity. Can also form heterooligomers with PLPP2 and PLPP3. Post-translationally, N-glycosylated. N-linked sugars are of the complex type. N-glycosylation is not required for the phosphatase activity. As to expression, widely expressed with highest expression found in prostate. Found to be down-regulated in colon adenocarcinomas. In terms of tissue distribution, predominant in kidney, lung, placenta and liver. Predominant in heart and pancreas.

The protein localises to the cell membrane. The protein resides in the apical cell membrane. It localises to the membrane raft. Its subcellular location is the membrane. It is found in the caveola. It carries out the reaction a 1,2-diacyl-sn-glycero-3-phosphate + H2O = a 1,2-diacyl-sn-glycerol + phosphate. It catalyses the reaction 1,2-dihexadecanoyl-sn-glycero-3-phosphate + H2O = 1,2-dihexadecanoyl-sn-glycerol + phosphate. The enzyme catalyses 1,2-di-(9Z-octadecenoyl)-sn-glycero-3-phosphate + H2O = 1,2-di-(9Z-octadecenoyl)-sn-glycerol + phosphate. The catalysed reaction is a monoacyl-sn-glycero-3-phosphate + H2O = a monoacylglycerol + phosphate. It carries out the reaction (9Z)-octadecenoyl-sn-glycero-3-phosphate + H2O = (9Z-octadecenoyl)-glycerol + phosphate. It catalyses the reaction a 1-acyl-sn-glycero-3-phosphate + H2O = a 1-acyl-sn-glycerol + phosphate. The enzyme catalyses 1-(9Z-octadecenoyl)-sn-glycero-3-phosphate + H2O = 1-(9Z-octadecenoyl)-sn-glycerol + phosphate. The catalysed reaction is a 1,2-diacyl-sn-glycerol 3-diphosphate + H2O = a 1,2-diacyl-sn-glycero-3-phosphate + phosphate + H(+). It carries out the reaction sphing-4-enine 1-phosphate + H2O = sphing-4-enine + phosphate. It catalyses the reaction an N-acylsphing-4-enine 1-phosphate + H2O = an N-acylsphing-4-enine + phosphate. The enzyme catalyses N-(octanoyl)-sphing-4-enine-1-phosphate + H2O = N-octanoylsphing-4-enine + phosphate. The catalysed reaction is N-(9Z-octadecenoyl)-ethanolamine phosphate + H2O = N-(9Z-octadecenoyl) ethanolamine + phosphate. It carries out the reaction 1-hexadecanoyl-2-(9Z-octadecenoyl)-sn-glycero-3-phosphate + H2O = 1-hexadecanoyl-2-(9Z-octadecenoyl)-sn-glycerol + phosphate. Its pathway is lipid metabolism; phospholipid metabolism. With respect to regulation, magnesium-independent phospholipid phosphatase. Insensitive to N-ethylmaleimide. Inhibited by sphingosine, zinc ions and modestly by propanolol. Inhibited by vanadate. Its function is as follows. Magnesium-independent phospholipid phosphatase of the plasma membrane that catalyzes the dephosphorylation of a variety of glycerolipid and sphingolipid phosphate esters including phosphatidate/PA, lysophosphatidate/LPA, diacylglycerol pyrophosphate/DGPP, sphingosine 1-phosphate/S1P and ceramide 1-phosphate/C1P. Also acts on N-oleoyl ethanolamine phosphate/N-(9Z-octadecenoyl)-ethanolamine phosphate, a potential physiological compound. Through its extracellular phosphatase activity allows both the hydrolysis and the cellular uptake of these bioactive lipid mediators from the milieu, regulating signal transduction in different cellular processes. It is for instance essential for the extracellular hydrolysis of S1P and subsequent conversion into intracellular S1P. Involved in the regulation of inflammation, platelets activation, cell proliferation and migration among other processes. May also have an intracellular activity to regulate phospholipid-mediated signaling pathways. The polypeptide is Phospholipid phosphatase 1 (Homo sapiens (Human)).